The primary structure comprises 272 residues: Phosphate import ATP-binding protein PstB (272 aa).

Positions 20–267 (VKKEVVYETN…PADQRTADYI (248 aa)) constitute an ABC transporter domain. Position 58-65 (58-65 (GPSGCGKS)) interacts with ATP.

Belongs to the ABC transporter superfamily. Phosphate importer (TC 3.A.1.7) family. As to quaternary structure, the complex is composed of two ATP-binding proteins (PstB), two transmembrane proteins (PstC and PstA) and a solute-binding protein (PstS).

It localises to the cell membrane. It catalyses the reaction phosphate(out) + ATP + H2O = ADP + 2 phosphate(in) + H(+). In terms of biological role, part of the ABC transporter complex PstSACB involved in phosphate import. Responsible for energy coupling to the transport system. This chain is Phosphate import ATP-binding protein PstB, found in Geobacillus kaustophilus (strain HTA426).